We begin with the raw amino-acid sequence, 751 residues long: Pyridoxal-dependent decarboxylase domain-containing protein 1 (751 aa).

The tract at residues 659-751 (QMRKEDSPDS…QEAESVETIR (93 aa)) is disordered. A compositionally biased stretch (polar residues) spans 690-702 (DSISETSSVSQLE). Residues 720–729 (PQERPAHILE) show a composition bias toward basic and acidic residues. Residues 742–751 (QEAESVETIR) are compositionally biased toward acidic residues.

This sequence belongs to the group II decarboxylase family. Pyridoxal 5'-phosphate serves as cofactor.

This is Pyridoxal-dependent decarboxylase domain-containing protein 1 (pdxdc1) from Danio rerio (Zebrafish).